The following is a 240-amino-acid chain: Proteasome subunit alpha (240 aa).

Belongs to the peptidase T1A family. As to quaternary structure, the 20S proteasome core is composed of 14 alpha and 14 beta subunits that assemble into four stacked heptameric rings, resulting in a barrel-shaped structure. The two inner rings, each composed of seven catalytic beta subunits, are sandwiched by two outer rings, each composed of seven alpha subunits. The catalytic chamber with the active sites is on the inside of the barrel. Has a gated structure, the ends of the cylinder being occluded by the N-termini of the alpha-subunits. Is capped at one or both ends by the proteasome regulatory ATPase, PAN.

The protein localises to the cytoplasm. The formation of the proteasomal ATPase PAN-20S proteasome complex, via the docking of the C-termini of PAN into the intersubunit pockets in the alpha-rings, triggers opening of the gate for substrate entry. Interconversion between the open-gate and close-gate conformations leads to a dynamic regulation of the 20S proteasome proteolysis activity. In terms of biological role, component of the proteasome core, a large protease complex with broad specificity involved in protein degradation. In Methanoregula boonei (strain DSM 21154 / JCM 14090 / 6A8), this protein is Proteasome subunit alpha.